The primary structure comprises 340 residues: Beta-ketoacyl-[acyl-carrier-protein] synthase III (340 aa).

Residues cysteine 122 and histidine 260 contribute to the active site. The ACP-binding stretch occupies residues 261–265; that stretch reads QANTR. The active site involves asparagine 291.

It belongs to the thiolase-like superfamily. FabH family. Homodimer.

Its subcellular location is the cytoplasm. It catalyses the reaction malonyl-[ACP] + acetyl-CoA + H(+) = 3-oxobutanoyl-[ACP] + CO2 + CoA. The protein operates within lipid metabolism; fatty acid biosynthesis. Functionally, catalyzes the condensation reaction of fatty acid synthesis by the addition to an acyl acceptor of two carbons from malonyl-ACP. Catalyzes the first condensation reaction which initiates fatty acid synthesis and may therefore play a role in governing the total rate of fatty acid production. Possesses both acetoacetyl-ACP synthase and acetyl transacylase activities. Its substrate specificity determines the biosynthesis of branched-chain and/or straight-chain of fatty acids. This chain is Beta-ketoacyl-[acyl-carrier-protein] synthase III, found in Mycobacteroides abscessus (strain ATCC 19977 / DSM 44196 / CCUG 20993 / CIP 104536 / JCM 13569 / NCTC 13031 / TMC 1543 / L948) (Mycobacterium abscessus).